The following is a 288-amino-acid chain: Phospholipid phosphatase 2 (288 aa).

Residues 1–4 (MQRR) are Cytoplasmic-facing. A helical transmembrane segment spans residues 5 to 25 (WVFVLLDVLCLLVASLPFAIL). Over 26–51 (TLVNAPYKRGFYCGDDSIRYPYRPDT) the chain is Lumenal. A helical transmembrane segment spans residues 52-72 (ITHGLMAGVTITATVILVSAG). Over 73-87 (EAYLVYTDRLYSRSD) the chain is Cytoplasmic. Residues 88-108 (FNNYVAAVYKVLGTFLFGAAV) form a helical membrane-spanning segment. Topologically, residues 109–162 (SQSLTDLAKYMIGRLRPNFLAVCDPDWSRVNCSVYVQLEKVCRGNPADVTEARL) are lumenal. The segment at 117 to 125 (KYMIGRLRP) is phosphatase sequence motif I. The N-linked (GlcNAc...) asparagine glycan is linked to N139. The helical transmembrane segment at 163-183 (SFYSGHSSFGMYCMVFLALYV) threads the bilayer. Positions 165-168 (YSGH) are phosphatase sequence motif II. H168 (proton donors) is an active-site residue. The Cytoplasmic portion of the chain corresponds to 184-196 (QARLCWKWARLLR). A helical membrane pass occupies residues 197-217 (PTVQFFLVAFALYVGYTRVSD). The tract at residues 213–224 (TRVSDYKHHWSD) is phosphatase sequence motif III. The Lumenal segment spans residues 218–226 (YKHHWSDVL). Catalysis depends on H220, which acts as the Nucleophile. Residues 227–247 (VGLLQGALVAALTVCYISDFF) form a helical membrane-spanning segment. At 248–288 (KARPPQHCLKEEELERKPSLSLTLTLGEADHNHYGYPHSSS) the chain is on the cytoplasmic side.

It belongs to the PA-phosphatase related phosphoesterase family. Forms functional homodimers and homooligomers. Can also form heterooligomers with PLPP1 and PLPP3. Post-translationally, N-glycosylated. As to expression, found mainly in brain, pancreas and placenta.

It is found in the membrane. Its subcellular location is the cell membrane. The protein localises to the early endosome membrane. It localises to the endoplasmic reticulum membrane. The enzyme catalyses a 1,2-diacyl-sn-glycero-3-phosphate + H2O = a 1,2-diacyl-sn-glycerol + phosphate. It catalyses the reaction 1,2-dihexadecanoyl-sn-glycero-3-phosphate + H2O = 1,2-dihexadecanoyl-sn-glycerol + phosphate. It carries out the reaction 1,2-di-(9Z-octadecenoyl)-sn-glycero-3-phosphate + H2O = 1,2-di-(9Z-octadecenoyl)-sn-glycerol + phosphate. The catalysed reaction is a monoacyl-sn-glycero-3-phosphate + H2O = a monoacylglycerol + phosphate. The enzyme catalyses (9Z)-octadecenoyl-sn-glycero-3-phosphate + H2O = (9Z-octadecenoyl)-glycerol + phosphate. It catalyses the reaction sphing-4-enine 1-phosphate + H2O = sphing-4-enine + phosphate. It carries out the reaction an N-acylsphing-4-enine 1-phosphate + H2O = an N-acylsphing-4-enine + phosphate. The catalysed reaction is N-(octanoyl)-sphing-4-enine-1-phosphate + H2O = N-octanoylsphing-4-enine + phosphate. The enzyme catalyses N-(9Z-octadecenoyl)-ethanolamine phosphate + H2O = N-(9Z-octadecenoyl) ethanolamine + phosphate. It functions in the pathway lipid metabolism; phospholipid metabolism. With respect to regulation, magnesium-independent phospholipid phosphatase. Insensitive to N-ethylmaleimide. Inhibited by sphingosine, zinc ions and modestly by propanolol. Its function is as follows. Magnesium-independent phospholipid phosphatase that catalyzes the dephosphorylation of a variety of glycerolipid and sphingolipid phosphate esters including phosphatidate/PA, lysophosphatidate/LPA, sphingosine 1-phosphate/S1P and ceramide 1-phosphate/C1P. Has no apparent extracellular phosphatase activity and therefore most probably acts intracellularly. Also acts on N-oleoyl ethanolamine phosphate/N-(9Z-octadecenoyl)-ethanolamine phosphate, a potential physiological compound. Through dephosphorylation of these bioactive lipid mediators produces new bioactive compounds and may regulate signal transduction in different cellular processes. Indirectly regulates, for instance, cell cycle G1/S phase transition through its phospholipid phosphatase activity. The sequence is that of Phospholipid phosphatase 2 from Homo sapiens (Human).